The chain runs to 524 residues: Bifunctional methyltransferase (524 aa).

A hemK region spans residues 1–306 (MQCSIKQILS…GHSRVILFSP (306 aa)). The segment at 1–308 (MQCSIKQILS…SRVILFSPIN (308 aa)) is RF MTase. Residues 146–150 (GTGSG), aspartate 169, tryptophan 198, asparagine 213, glutamate 353, glutamate 378, asparagine 405, and aspartate 427 contribute to the S-adenosyl-L-methionine site. 213–216 (NPPY) lines the substrate pocket. The tract at residues 307–524 (INLNRSYARR…MILRHVLGDH (218 aa)) is tRNA (guanine-N(7)-)-methyltransferase. Positions 311-524 (RSYARRIGKS…MILRHVLGDH (214 aa)) are tRNA MTase. Aspartate 427 is an active-site residue. Residues lysine 431 and aspartate 463 each contribute to the substrate site.

The protein in the C-terminal section; belongs to the class I-like SAM-binding methyltransferase superfamily. TrmB family. In the N-terminal section; belongs to the protein N5-glutamine methyltransferase family. PrmC subfamily.

The catalysed reaction is L-glutaminyl-[peptide chain release factor] + S-adenosyl-L-methionine = N(5)-methyl-L-glutaminyl-[peptide chain release factor] + S-adenosyl-L-homocysteine + H(+). The enzyme catalyses guanosine(46) in tRNA + S-adenosyl-L-methionine = N(7)-methylguanosine(46) in tRNA + S-adenosyl-L-homocysteine. Its function is as follows. Methylates the class 1 translation termination release factors RF1/PrfA and RF2/PrfB on the glutamine residue of the universally conserved GGQ motif. In terms of biological role, catalyzes the formation of N(7)-methylguanine at position 46 (m7G46) in tRNA. The polypeptide is Bifunctional methyltransferase (prmC/trmB) (Rickettsia conorii (strain ATCC VR-613 / Malish 7)).